The sequence spans 95 residues: Small ribosomal subunit protein bS20c (95 aa).

Positions 76 to 95 (NGSAKKAKLTKRLKEKKISL) are disordered. Over residues 80-95 (KKAKLTKRLKEKKISL) the composition is skewed to basic residues.

The protein belongs to the bacterial ribosomal protein bS20 family.

The protein localises to the plastid. Its subcellular location is the chloroplast. Functionally, binds directly to 16S ribosomal RNA. This is Small ribosomal subunit protein bS20c from Guillardia theta (Cryptophyte).